Reading from the N-terminus, the 422-residue chain is Keratan-sulfate endo-1,4-beta-galactosidase (422 aa).

The N-terminal stretch at 1–46 (MRKTKFWLVLSLIATSLSIFACKKDSTATKNPIPEVSKAKASTKLL) is a signal peptide. A GH16 domain is found at 47–292 (NATTVATTDY…YVRVYKLPLF (246 aa)). Glu171 serves as the catalytic Nucleophile. Residue Glu176 is the Proton donor of the active site. Positions 291-406 (LFSNGDFESG…NTTATVYFYK (116 aa)) constitute a CBM-cenC domain.

This sequence belongs to the glycosyl hydrolase 16 family.

The protein resides in the secreted. It catalyses the reaction Endohydrolysis of (1-&gt;4)-beta-D-galactosidic linkages in keratan sulfate.. Its function is as follows. Hydrolyzes internal endo-beta-galactosyl linkages in keratan sulfate and in various neolacto-type glycosphingolipids, producing sulfated and non-sulfated disaccharides, and glucosylceramides respectivly. The polypeptide is Keratan-sulfate endo-1,4-beta-galactosidase (Sphingobacterium multivorum).